The sequence spans 551 residues: uncharacterized protein (551 aa).

The next 6 helical transmembrane spans lie at 1-21 (MIAY…IVNS), 25-45 (WTYF…LMVS), 99-119 (GALF…FGFN), 124-144 (LGVL…SLMW), 266-286 (FAFL…GVFY), and 490-510 (FLDL…SAED).

Its subcellular location is the cell membrane. This is an uncharacterized protein from Haemophilus influenzae (strain ATCC 51907 / DSM 11121 / KW20 / Rd).